We begin with the raw amino-acid sequence, 277 residues long: Phosphatidylglycerol--prolipoprotein diacylglyceryl transferase (277 aa).

The next 4 membrane-spanning stretches (helical) occupy residues 18–38 (ISVK…LLLA), 51–71 (IIVD…RIYY), 89–109 (IWHG…TAII), and 116–136 (ISFW…QAIG). Residue Arg-137 coordinates a 1,2-diacyl-sn-glycero-3-phospho-(1'-sn-glycerol). 3 helical membrane passes run 177–197 (QPTF…LLII), 205–225 (GELF…IEGM), and 235–255 (FRVS…IIIY).

It belongs to the Lgt family.

The protein resides in the cell membrane. It catalyses the reaction L-cysteinyl-[prolipoprotein] + a 1,2-diacyl-sn-glycero-3-phospho-(1'-sn-glycerol) = an S-1,2-diacyl-sn-glyceryl-L-cysteinyl-[prolipoprotein] + sn-glycerol 1-phosphate + H(+). The protein operates within protein modification; lipoprotein biosynthesis (diacylglyceryl transfer). Its function is as follows. Catalyzes the transfer of the diacylglyceryl group from phosphatidylglycerol to the sulfhydryl group of the N-terminal cysteine of a prolipoprotein, the first step in the formation of mature lipoproteins. This is Phosphatidylglycerol--prolipoprotein diacylglyceryl transferase from Listeria monocytogenes serotype 4b (strain CLIP80459).